The following is a 604-amino-acid chain: Phosphomethylpyrimidine synthase (604 aa).

Residues Asn-218, Met-247, Tyr-276, His-312, Ser-332 to Gly-334, Asp-373 to Arg-376, and Glu-412 contribute to the substrate site. His-416 contributes to the Zn(2+) binding site. Tyr-439 lines the substrate pocket. His-480 is a Zn(2+) binding site. [4Fe-4S] cluster contacts are provided by Cys-560, Cys-563, and Cys-568.

This sequence belongs to the ThiC family. Homodimer. [4Fe-4S] cluster serves as cofactor.

The catalysed reaction is 5-amino-1-(5-phospho-beta-D-ribosyl)imidazole + S-adenosyl-L-methionine = 4-amino-2-methyl-5-(phosphooxymethyl)pyrimidine + CO + 5'-deoxyadenosine + formate + L-methionine + 3 H(+). It participates in cofactor biosynthesis; thiamine diphosphate biosynthesis. Catalyzes the synthesis of the hydroxymethylpyrimidine phosphate (HMP-P) moiety of thiamine from aminoimidazole ribotide (AIR) in a radical S-adenosyl-L-methionine (SAM)-dependent reaction. In Zymomonas mobilis subsp. mobilis (strain ATCC 31821 / ZM4 / CP4), this protein is Phosphomethylpyrimidine synthase.